We begin with the raw amino-acid sequence, 199 residues long: Outer-membrane lipoprotein LolB (199 aa).

The first 28 residues, 1 to 28 (MSVCPAPRSPVRWLHAFTLCLLLAVLAG), serve as a signal peptide directing secretion. Residue cysteine 29 is the site of N-palmitoyl cysteine attachment. A lipid anchor (S-diacylglycerol cysteine) is attached at cysteine 29.

It belongs to the LolB family. As to quaternary structure, monomer.

The protein resides in the cell outer membrane. In terms of biological role, plays a critical role in the incorporation of lipoproteins in the outer membrane after they are released by the LolA protein. This Bordetella parapertussis (strain 12822 / ATCC BAA-587 / NCTC 13253) protein is Outer-membrane lipoprotein LolB.